A 159-amino-acid chain; its full sequence is Small ribosomal subunit protein uS7c (159 aa).

A disordered region spans residues 137–159 (HAIRKKEETHKMAESNRAXAHYR). Residues 141–150 (KKEETHKMAE) are compositionally biased toward basic and acidic residues.

Belongs to the universal ribosomal protein uS7 family. In terms of assembly, part of the 30S ribosomal subunit.

It localises to the plastid. Its subcellular location is the chloroplast. Its function is as follows. One of the primary rRNA binding proteins, it binds directly to 16S rRNA where it nucleates assembly of the head domain of the 30S subunit. This chain is Small ribosomal subunit protein uS7c (rps7), found in Sciadopitys verticillata (Japanese umbrella-pine).